The primary structure comprises 207 residues: Vexin (207 aa).

Residues 65 to 104 (RDTGDRRWLQTGRLQTARPPGAHPTKTPSRPVGISEPKTS) are disordered.

It belongs to the vexin family.

Its subcellular location is the cell membrane. The protein localises to the nucleus. In terms of biological role, required for neurogenesis in the neural plate and retina. Strongly cooperates with neural bHLH factors to promote neurogenesis. In Mus musculus (Mouse), this protein is Vexin.